The chain runs to 670 residues: Probable Na(+)/H(+) antiporter nhx-3 (670 aa).

8 helical membrane passes run Val-41–Met-61, Leu-73–Val-93, Ser-97–Pro-117, Leu-129–Ile-149, Glu-164–Phe-184, Phe-192–Tyr-212, Gly-235–Ala-255, and Ile-268–Val-288. Asn-310 carries N-linked (GlcNAc...) asparagine glycosylation. Transmembrane regions (helical) follow at residues Met-325–Ser-345, Phe-351–Val-371, Phe-390–Pro-410, and Met-418–Ile-438. Residues Gly-648–Val-670 are disordered.

The protein belongs to the monovalent cation:proton antiporter 1 (CPA1) transporter (TC 2.A.36) family. Post-translationally, phosphorylated. As to expression, expressed in hypodermal cells of the main body syncytium, ut1 cells of the vulva and the spermathecal junction cell.

The protein localises to the endomembrane system. Its function is as follows. Plays a role in epithelial membrane transport processes. The polypeptide is Probable Na(+)/H(+) antiporter nhx-3 (nhx-3) (Caenorhabditis elegans).